The following is a 126-amino-acid chain: Large ribosomal subunit protein bL12 (126 aa).

The protein belongs to the bacterial ribosomal protein bL12 family. Homodimer. Part of the ribosomal stalk of the 50S ribosomal subunit. Forms a multimeric L10(L12)X complex, where L10 forms an elongated spine to which 2 to 4 L12 dimers bind in a sequential fashion. Binds GTP-bound translation factors.

In terms of biological role, forms part of the ribosomal stalk which helps the ribosome interact with GTP-bound translation factors. Is thus essential for accurate translation. This chain is Large ribosomal subunit protein bL12, found in Chlorobaculum tepidum (strain ATCC 49652 / DSM 12025 / NBRC 103806 / TLS) (Chlorobium tepidum).